The following is a 63-amino-acid chain: MQSGNFTLEVIMYLINSILAFIMIFFTFVNPSLLKCQYWTYILVALITAIIFHTGSKVGKSSG.

Over methionine 1–leucine 8 the chain is Extracellular. Residues glutamate 9 to valine 29 form a helical membrane-spanning segment. The Cytoplasmic portion of the chain corresponds to asparagine 30–proline 31. A helical membrane pass occupies residues serine 32–phenylalanine 52. Topologically, residues histidine 53–glycine 63 are extracellular.

Its subcellular location is the host membrane. This Acidianus filamentous virus 1 (isolate United States/Yellowstone) (AFV-1) protein is Putative transmembrane protein ORF63.